A 216-amino-acid chain; its full sequence is MRMILLGPPGAGKGTQAKLISEKYSIPHISTGDIFRKNISEKTPLGVKAKEYMDKGQLVPDELTIDLVNDRLTHEDCKKGFLLDGFPRTVKQAEALEKFLTENNQSLDTALLIDVPSSFILERMTGRRVCPSCGASYHIKFNPPKIEGLCDVCKKEVIQRKDDTEETVKERIEVYDRQTQPLVDFYSSKDQLFVVDGTQSIDQVFETISNHIEGDK.

ATP is bound at residue 10-15 (GAGKGT). Residues 30-59 (STGDIFRKNISEKTPLGVKAKEYMDKGQLV) are NMP. Residues Thr-31, Arg-36, 57–59 (QLV), 85–88 (GFPR), and Gln-92 contribute to the AMP site. Positions 126–163 (GRRVCPSCGASYHIKFNPPKIEGLCDVCKKEVIQRKDD) are LID. Position 127 (Arg-127) interacts with ATP. Zn(2+) is bound by residues Cys-130 and Cys-133. 136–137 (SY) is an ATP binding site. Cys-150 and Cys-153 together coordinate Zn(2+). The AMP site is built by Arg-160 and Arg-171. Position 199 (Gln-199) interacts with ATP.

It belongs to the adenylate kinase family. As to quaternary structure, monomer.

The protein resides in the cytoplasm. It carries out the reaction AMP + ATP = 2 ADP. It participates in purine metabolism; AMP biosynthesis via salvage pathway; AMP from ADP: step 1/1. In terms of biological role, catalyzes the reversible transfer of the terminal phosphate group between ATP and AMP. Plays an important role in cellular energy homeostasis and in adenine nucleotide metabolism. The chain is Adenylate kinase from Clostridium novyi (strain NT).